The primary structure comprises 389 residues: Putative sugar efflux transporter DR_1322 (389 aa).

The next 12 membrane-spanning stretches (helical) occupy residues 10–30 (AVLL…LFAV), 34–54 (GMTP…AVLV), 69–89 (KPLV…LSGV), 96–116 (MATG…VFAF), 135–155 (VLRA…AAVL), 161–181 (SGVF…LLFI), 211–231 (GWVV…MVMF), 246–266 (VGFL…LFVL), 281–301 (LLLF…PLLI), 308–328 (AAVL…LMPG), 341–361 (SVVG…VFGY), and 363–383 (PVFL…LWAT).

This sequence belongs to the major facilitator superfamily. Set transporter family.

It is found in the cell membrane. Functionally, involved in the efflux of sugars. The physiological role may be the detoxification of non-metabolizable sugar analogs. In Deinococcus radiodurans (strain ATCC 13939 / DSM 20539 / JCM 16871 / CCUG 27074 / LMG 4051 / NBRC 15346 / NCIMB 9279 / VKM B-1422 / R1), this protein is Putative sugar efflux transporter DR_1322.